We begin with the raw amino-acid sequence, 228 residues long: Ribonuclease 3 (228 aa).

An RNase III domain is found at 5 to 127 (LMALQARLQH…VIGAVYLDAG (123 aa)). Glu-40 contacts Mg(2+). Asp-44 is a catalytic residue. Mg(2+)-binding residues include Asp-113 and Glu-116. Glu-116 is a catalytic residue. Positions 154 to 224 (DPKTELQEWL…AAAMLQTLKA (71 aa)) constitute a DRBM domain.

The protein belongs to the ribonuclease III family. As to quaternary structure, homodimer. Requires Mg(2+) as cofactor.

The protein localises to the cytoplasm. The enzyme catalyses Endonucleolytic cleavage to 5'-phosphomonoester.. Digests double-stranded RNA. Involved in the processing of primary rRNA transcript to yield the immediate precursors to the large and small rRNAs (23S and 16S). Processes some mRNAs, and tRNAs when they are encoded in the rRNA operon. Processes pre-crRNA and tracrRNA of type II CRISPR loci if present in the organism. The chain is Ribonuclease 3 from Albidiferax ferrireducens (strain ATCC BAA-621 / DSM 15236 / T118) (Rhodoferax ferrireducens).